The primary structure comprises 1270 residues: Breakpoint cluster region protein (1270 aa).

Met-1 is modified (N-acetylmethionine). The kinase stretch occupies residues 1 to 428 (MVDSVGFAEA…DGDSTFQGEA (428 aa)). Residues 28–55 (VGDIEQELERCKASIRRLEQEVNQERFR) adopt a coiled-coil conformation. The segment at 67-173 (KKSYDRQRWG…GPAQPGSADA (107 aa)) is disordered. Positions 121 to 139 (GSPSKGRSASARRPAAAAS) are enriched in low complexity. Residues Ser-122 and Ser-139 each carry the phosphoserine modification. Phosphotyrosine; by HCK is present on Tyr-178. The interval 198–387 (SDRISSLGSQ…QSFDSSSPPT (190 aa)) is binding to ABL SH2-domain. Disordered stretches follow at residues 201 to 249 (ISSL…DYED), 295 to 396 (KSPL…RHRQ), and 412 to 481 (TGQI…SGAL). A phosphoserine mark is found at Ser-203, Ser-216, and Ser-237. Tyr-247 carries the phosphotyrosine; by FES modification. Low complexity-rich tracts occupy residues 348–358 (SSGQSSRVSPS) and 371–384 (SPSQ…DSSS). Ser-358, Ser-379, and Ser-384 each carry phosphoserine. Position 387 is a phosphothreonine (Thr-387). Residues Ser-461 and Ser-465 each carry the phosphoserine modification. At Arg-473 the chain carries Omega-N-methylarginine. Phosphoserine is present on residues Ser-475 and Ser-487. Positions 497–690 (MRKWVLSGIL…QNFLSSINEE (194 aa)) constitute a DH domain. Position 553 is a phosphotyrosine (Tyr-553). Phosphothreonine is present on Thr-640. Tyr-643 is modified (phosphotyrosine). Thr-692 carries the phosphothreonine modification. Positions 707–865 (QLLKDSFMVE…WRESIREQQK (159 aa)) constitute a PH domain. Positions 892–1019 (HHIPLTINKE…QDRDWQRTVI (128 aa)) constitute a C2 domain. Positions 1053–1247 (VKIAVVTKRE…VMSQVQVLLY (195 aa)) constitute a Rho-GAP domain. Ser-1263 is modified (phosphoserine).

In terms of assembly, homotetramer. Interacts with PDZK1. Interacts with HCK, FES/FPS, ABL1, PIK3R1 and GRB2. May interact with CCPG1. Interacts with SH2D5. Interacts with DLG4. In terms of processing, autophosphorylated. Phosphorylated by FES/FPS on tyrosine residues, leading to down-regulation of the BCR kinase activity. Phosphorylation at Tyr-178 by HCK is important for interaction with GRB2. As to expression, expressed in brain. In hippocampal subregions, most abundant in the CA1 region and expressed at successively lower levels in the dentate gyrus and the CA3 region.

It is found in the postsynaptic density. The protein resides in the cell projection. It localises to the dendritic spine. The protein localises to the axon. Its subcellular location is the synapse. The catalysed reaction is L-seryl-[protein] + ATP = O-phospho-L-seryl-[protein] + ADP + H(+). It catalyses the reaction L-threonyl-[protein] + ATP = O-phospho-L-threonyl-[protein] + ADP + H(+). Protein with a unique structure having two opposing regulatory activities toward small GTP-binding proteins. The C-terminus is a GTPase-activating protein (GAP) domain which stimulates GTP hydrolysis by RAC1, RAC2 and CDC42. Accelerates the intrinsic rate of GTP hydrolysis of RAC1 or CDC42, leading to down-regulation of the active GTP-bound form. The central Dbl homology (DH) domain functions as guanine nucleotide exchange factor (GEF) that modulates the GTPases CDC42, RHOA and RAC1. Promotes the conversion of CDC42, RHOA and RAC1 from the GDP-bound to the GTP-bound form. The amino terminus contains an intrinsic kinase activity. Functions as an important negative regulator of neuronal RAC1 activity. Regulates macrophage functions such as CSF1-directed motility and phagocytosis through the modulation of RAC1 activity. Plays a major role as a RHOA GEF in keratinocytes being involved in focal adhesion formation and keratinocyte differentiation. The chain is Breakpoint cluster region protein from Mus musculus (Mouse).